The sequence spans 149 residues: uncharacterized protein (149 aa).

This is an uncharacterized protein from Acanthamoeba polyphaga mimivirus (APMV).